The following is a 254-amino-acid chain: Acetylglutamate kinase (254 aa).

Substrate is bound by residues 40-41 (GG), arginine 62, and asparagine 154.

Belongs to the acetylglutamate kinase family. ArgB subfamily.

The protein resides in the cytoplasm. It carries out the reaction N-acetyl-L-glutamate + ATP = N-acetyl-L-glutamyl 5-phosphate + ADP. The protein operates within amino-acid biosynthesis; L-arginine biosynthesis; N(2)-acetyl-L-ornithine from L-glutamate: step 2/4. In terms of biological role, catalyzes the ATP-dependent phosphorylation of N-acetyl-L-glutamate. This chain is Acetylglutamate kinase, found in Staphylococcus aureus (strain Mu3 / ATCC 700698).